Here is a 583-residue protein sequence, read N- to C-terminus: Aspartate--tRNA ligase (583 aa).

Glu-174 lines the L-aspartate pocket. The segment at 198–201 (QITK) is aspartate. Arg-220 is an L-aspartate binding site. ATP-binding positions include 220–222 (RDE) and Gln-229. His-443 is a binding site for L-aspartate. Glu-477 contacts ATP. Residue Arg-484 participates in L-aspartate binding. 529-532 (GLDR) lines the ATP pocket.

It belongs to the class-II aminoacyl-tRNA synthetase family. Type 1 subfamily. Homodimer.

The protein resides in the cytoplasm. The catalysed reaction is tRNA(Asp) + L-aspartate + ATP = L-aspartyl-tRNA(Asp) + AMP + diphosphate. In terms of biological role, catalyzes the attachment of L-aspartate to tRNA(Asp) in a two-step reaction: L-aspartate is first activated by ATP to form Asp-AMP and then transferred to the acceptor end of tRNA(Asp). This is Aspartate--tRNA ligase from Streptococcus agalactiae serotype III (strain NEM316).